An 830-amino-acid polypeptide reads, in one-letter code: Leucine--tRNA ligase (830 aa).

The 'HIGH' region signature appears at 48–58 (PYPSGAIHMGH). The short motif at 596–600 (KMSKS) is the 'KMSKS' region element. An ATP-binding site is contributed by K599.

This sequence belongs to the class-I aminoacyl-tRNA synthetase family.

Its subcellular location is the cytoplasm. The enzyme catalyses tRNA(Leu) + L-leucine + ATP = L-leucyl-tRNA(Leu) + AMP + diphosphate. The protein is Leucine--tRNA ligase of Helicobacter hepaticus (strain ATCC 51449 / 3B1).